The primary structure comprises 304 residues: GTPase Era (304 aa).

An Era-type G domain is found at 11–179 (YCGFIAIVGR…QKIVRKSLRE (169 aa)). The segment at 19-26 (GRPNVGKS) is G1. Residue 19 to 26 (GRPNVGKS) coordinates GTP. Positions 45 to 49 (QTTRH) are G2. Positions 66–69 (DTPG) are G3. Residues 66–70 (DTPGL) and 128–131 (NKVD) each bind GTP. The tract at residues 128–131 (NKVD) is G4. The tract at residues 158–160 (ISA) is G5. The 78-residue stretch at 210–287 (TGEELPYSVT…HLELWVKVKA (78 aa)) folds into the KH type-2 domain.

Belongs to the TRAFAC class TrmE-Era-EngA-EngB-Septin-like GTPase superfamily. Era GTPase family. As to quaternary structure, monomer.

The protein resides in the cytoplasm. Its subcellular location is the cell inner membrane. In terms of biological role, an essential GTPase that binds both GDP and GTP, with rapid nucleotide exchange. Plays a role in 16S rRNA processing and 30S ribosomal subunit biogenesis and possibly also in cell cycle regulation and energy metabolism. This is GTPase Era from Actinobacillus pleuropneumoniae serotype 3 (strain JL03).